A 133-amino-acid chain; its full sequence is Ribonuclease VapC10 (133 aa).

Residues 2 to 119 (ILVDSDVLIA…NVWHFPMFEQ (118 aa)) form the PINc domain. Mg(2+)-binding residues include aspartate 5 and aspartate 92.

This sequence belongs to the PINc/VapC protein family. Mg(2+) is required as a cofactor.

Its function is as follows. Toxic component of a type II toxin-antitoxin (TA) system. An RNase. The cognate antitoxin is VapB10. In Mycobacterium tuberculosis (strain CDC 1551 / Oshkosh), this protein is Ribonuclease VapC10.